The chain runs to 335 residues: tRNA N6-adenosine threonylcarbamoyltransferase (335 aa).

Fe cation-binding residues include histidine 110 and histidine 114. Substrate-binding positions include 132-136 (LVSGG), aspartate 165, glycine 178, and asparagine 271. A Fe cation-binding site is contributed by aspartate 299.

It belongs to the KAE1 / TsaD family. Fe(2+) is required as a cofactor.

It localises to the cytoplasm. It carries out the reaction L-threonylcarbamoyladenylate + adenosine(37) in tRNA = N(6)-L-threonylcarbamoyladenosine(37) in tRNA + AMP + H(+). In terms of biological role, required for the formation of a threonylcarbamoyl group on adenosine at position 37 (t(6)A37) in tRNAs that read codons beginning with adenine. Is involved in the transfer of the threonylcarbamoyl moiety of threonylcarbamoyl-AMP (TC-AMP) to the N6 group of A37, together with TsaE and TsaB. TsaD likely plays a direct catalytic role in this reaction. This Campylobacter jejuni subsp. doylei (strain ATCC BAA-1458 / RM4099 / 269.97) protein is tRNA N6-adenosine threonylcarbamoyltransferase.